Here is a 356-residue protein sequence, read N- to C-terminus: Tyrosine recombinase XerS (356 aa).

The region spanning 16–121 is the Core-binding (CB) domain; that stretch reads LMPWFVLEYY…ALSSLYKYLT (106 aa). Positions 169-354 constitute a Tyr recombinase domain; that stretch reads KFLDYVENEY…VNDEQKNALD (186 aa). Residues R210, K234, H306, R309, and H332 contribute to the active site. The active-site O-(3'-phospho-DNA)-tyrosine intermediate is Y341.

The protein belongs to the 'phage' integrase family. XerS subfamily.

The protein localises to the cytoplasm. FtsK is required for recombination. In terms of biological role, site-specific tyrosine recombinase, which acts by catalyzing the cutting and rejoining of the recombining DNA molecules. Essential to convert dimers of the bacterial chromosome into monomers to permit their segregation at cell division. The protein is Tyrosine recombinase XerS of Streptococcus thermophilus (strain ATCC BAA-491 / LMD-9).